A 112-amino-acid chain; its full sequence is Photosystem II reaction center Psb28 protein (112 aa).

The protein belongs to the Psb28 family. Part of the photosystem II complex.

Its subcellular location is the cellular thylakoid membrane. This is Photosystem II reaction center Psb28 protein from Synechocystis sp. (strain ATCC 27184 / PCC 6803 / Kazusa).